Here is a 330-residue protein sequence, read N- to C-terminus: Lipoyl synthase (330 aa).

The interval 1 to 31 is disordered; sequence MSDAPIATSSEVTQSPADYDPTKKQKSAEKT. Polar residues predominate over residues 7–16; it reads ATSSEVTQSP. Residues 20–31 are compositionally biased toward basic and acidic residues; it reads DPTKKQKSAEKT. Residues C77, C82, C88, C103, C107, C110, and S317 each coordinate [4Fe-4S] cluster. The Radical SAM core domain occupies 88-306; the sequence is CFGKGTATFM…EEEAYKMGFT (219 aa).

Belongs to the radical SAM superfamily. Lipoyl synthase family. [4Fe-4S] cluster is required as a cofactor.

It is found in the cytoplasm. It carries out the reaction [[Fe-S] cluster scaffold protein carrying a second [4Fe-4S](2+) cluster] + N(6)-octanoyl-L-lysyl-[protein] + 2 oxidized [2Fe-2S]-[ferredoxin] + 2 S-adenosyl-L-methionine + 4 H(+) = [[Fe-S] cluster scaffold protein] + N(6)-[(R)-dihydrolipoyl]-L-lysyl-[protein] + 4 Fe(3+) + 2 hydrogen sulfide + 2 5'-deoxyadenosine + 2 L-methionine + 2 reduced [2Fe-2S]-[ferredoxin]. Its pathway is protein modification; protein lipoylation via endogenous pathway; protein N(6)-(lipoyl)lysine from octanoyl-[acyl-carrier-protein]: step 2/2. Catalyzes the radical-mediated insertion of two sulfur atoms into the C-6 and C-8 positions of the octanoyl moiety bound to the lipoyl domains of lipoate-dependent enzymes, thereby converting the octanoylated domains into lipoylated derivatives. The chain is Lipoyl synthase from Cupriavidus metallidurans (strain ATCC 43123 / DSM 2839 / NBRC 102507 / CH34) (Ralstonia metallidurans).